The primary structure comprises 371 residues: Peptidyl-prolyl cis-trans isomerase D (371 aa).

Residues 11–172 (FFDIQIGNEK…KDVTIVECGE (162 aa)) enclose the PPIase cyclophilin-type domain. The disordered stretch occupies residues 175 to 195 (GQDYDDADKQTPDATGDPYED). 3 TPR repeats span residues 214 to 247 (ASEL…LHEF), 267 to 300 (FALH…ANAA), and 308 to 341 (AKAY…APGD).

The protein belongs to the cyclophilin-type PPIase family. PPIase D subfamily.

It is found in the cytoplasm. The enzyme catalyses [protein]-peptidylproline (omega=180) = [protein]-peptidylproline (omega=0). In terms of biological role, PPIases accelerate the folding of proteins. It catalyzes the cis-trans isomerization of proline imidic peptide bonds in oligopeptides. The protein is Peptidyl-prolyl cis-trans isomerase D (cpr6) of Aspergillus oryzae (strain ATCC 42149 / RIB 40) (Yellow koji mold).